Reading from the N-terminus, the 401-residue chain is MSTASAFSSIQGCWFKGERKIRVADKRAKRLTLGSHVASPSSMSFRVSASSSVKPEKDIRIGLLGASGYTGAEIVRLLANHPHFQVTLMTADRKAGQSMESVFPHLRAQKLPTLVSVKDADFSTVDAVFCCLPHGTTQEIIKELPTALKIVDLSADFRLRNIAEYEEWYGQPHKAVELQKEVVYGLTEILREDIKKARLVANPGCYPTTIQLPLVPLLKANLIKHENIIIDAKSGVSGAGRGAKEANLYSEIAEGISSYGVTRHRHVPEIEQGLSDVAQSKVTVSFTPHLMPMIRGMQSTIYVEMAPGVRTEDLHQQLKTSYEDEEFVKVLDEGVVPRTHNVRGSNYCHMSVFPDRIPGRAIIISVIDNLVKGASGQALQNLNIMLGYPETTGLLHQPLFP.

A chloroplast-targeting transit peptide spans 1–48 (MSTASAFSSIQGCWFKGERKIRVADKRAKRLTLGSHVASPSSMSFRVS). Cys-205 is a catalytic residue.

Belongs to the NAGSA dehydrogenase family. Type 1 subfamily. In terms of assembly, homotetramer.

Its subcellular location is the plastid. It localises to the chloroplast. The enzyme catalyses N-acetyl-L-glutamate 5-semialdehyde + phosphate + NADP(+) = N-acetyl-L-glutamyl 5-phosphate + NADPH + H(+). It participates in amino-acid biosynthesis; L-arginine biosynthesis; N(2)-acetyl-L-ornithine from L-glutamate: step 3/4. The sequence is that of Probable N-acetyl-gamma-glutamyl-phosphate reductase, chloroplastic from Arabidopsis thaliana (Mouse-ear cress).